The chain runs to 243 residues: Adenosylcobinamide-GDP ribazoletransferase (243 aa).

5 helical membrane-spanning segments follow: residues 31 to 48 (LLFY…LWVL), 61 to 81 (AALL…DGLA), 109 to 129 (IAVV…VALI), 134 to 154 (GFAL…LFLC), and 188 to 208 (LLLG…LFFW).

The protein belongs to the CobS family. Mg(2+) is required as a cofactor.

The protein localises to the cell inner membrane. The catalysed reaction is alpha-ribazole + adenosylcob(III)inamide-GDP = adenosylcob(III)alamin + GMP + H(+). The enzyme catalyses alpha-ribazole 5'-phosphate + adenosylcob(III)inamide-GDP = adenosylcob(III)alamin 5'-phosphate + GMP + H(+). It participates in cofactor biosynthesis; adenosylcobalamin biosynthesis; adenosylcobalamin from cob(II)yrinate a,c-diamide: step 7/7. Joins adenosylcobinamide-GDP and alpha-ribazole to generate adenosylcobalamin (Ado-cobalamin). Also synthesizes adenosylcobalamin 5'-phosphate from adenosylcobinamide-GDP and alpha-ribazole 5'-phosphate. The protein is Adenosylcobinamide-GDP ribazoletransferase of Pseudomonas fluorescens (strain ATCC BAA-477 / NRRL B-23932 / Pf-5).